Consider the following 291-residue polypeptide: ATP synthase gamma chain (291 aa).

This sequence belongs to the ATPase gamma chain family. In terms of assembly, F-type ATPases have 2 components, CF(1) - the catalytic core - and CF(0) - the membrane proton channel. CF(1) has five subunits: alpha(3), beta(3), gamma(1), delta(1), epsilon(1). CF(0) has three main subunits: a, b and c.

It localises to the cell membrane. Produces ATP from ADP in the presence of a proton gradient across the membrane. The gamma chain is believed to be important in regulating ATPase activity and the flow of protons through the CF(0) complex. The polypeptide is ATP synthase gamma chain (Streptococcus equi subsp. zooepidemicus (strain MGCS10565)).